The chain runs to 190 residues: DNA-invertase (190 aa).

The Resolvase/invertase-type recombinase catalytic domain maps to 2 to 135 (ATIGYIRVST…AGLAAARAQG (134 aa)). Catalysis depends on S10, which acts as the O-(5'-phospho-DNA)-serine intermediate. Residues 162–181 (RQQLAIIFGIGVSTLYRYFP) constitute a DNA-binding region (H-T-H motif).

Belongs to the site-specific recombinase resolvase family.

A DNA fragment of approximately 900 base pairs, adjacent to the fljB (H2) gene, which specifies the synthesis of phase-2 flagellin, can exist in either orientation with respect to fljB. The orientation of the inversion region controls expression of fljB. The hin gene occupies about two-thirds of the inversion region; it is required for the inversion of the fljB controlling region. The chain is DNA-invertase (hin) from Salmonella abortus-equi.